A 72-amino-acid chain; its full sequence is Large ribosomal subunit protein bL31 (72 aa).

It belongs to the bacterial ribosomal protein bL31 family. Type A subfamily. In terms of assembly, part of the 50S ribosomal subunit.

In terms of biological role, binds the 23S rRNA. The chain is Large ribosomal subunit protein bL31 from Rhodospirillum rubrum (strain ATCC 11170 / ATH 1.1.1 / DSM 467 / LMG 4362 / NCIMB 8255 / S1).